The primary structure comprises 338 residues: Thiamine thiazole synthase (338 aa).

A disordered region spans residues 1 to 43; it reads MSPVATESMYKPTTINQTAHQQAMDPLKSKQQSNATVNKPAFK. Residues 11–21 are compositionally biased toward polar residues; it reads KPTTINQTAHQ. Substrate contacts are provided by residues Ala91, 112 to 113, Gly120, and Cys185; that span reads ES. Position 221 is a 2,3-didehydroalanine (Cys) (Cys221). Residues Asp223, His238, Met290, and 300–302 each bind substrate; that span reads RMG.

The protein belongs to the THI4 family. Homooctamer. Fe cation serves as cofactor. In terms of processing, during the catalytic reaction, a sulfide is transferred from Cys-221 to a reaction intermediate, generating a dehydroalanine residue. As to expression, highly expressed in haustoria, and only in low amounts in intercellular hyphae. Found in the basal hyphae of the uredia, but not in the pedicels and only at very low levels in uredospores.

The protein resides in the cytoplasm. Its subcellular location is the nucleus. The enzyme catalyses [ADP-thiazole synthase]-L-cysteine + glycine + NAD(+) = [ADP-thiazole synthase]-dehydroalanine + ADP-5-ethyl-4-methylthiazole-2-carboxylate + nicotinamide + 3 H2O + 2 H(+). In terms of biological role, involved in biosynthesis of the thiamine precursor thiazole. Catalyzes the conversion of NAD and glycine to adenosine diphosphate 5-(2-hydroxyethyl)-4-methylthiazole-2-carboxylic acid (ADT), an adenylated thiazole intermediate. The reaction includes an iron-dependent sulfide transfer from a conserved cysteine residue of the protein to a thiazole intermediate. The enzyme can only undergo a single turnover, which suggests it is a suicide enzyme. May have additional roles in adaptation to various stress conditions and in DNA damage tolerance. In Uromyces fabae (Rust fungus), this protein is Thiamine thiazole synthase (THI2).